The sequence spans 358 residues: Phospho-N-acetylmuramoyl-pentapeptide-transferase (358 aa).

Helical transmembrane passes span 26–46, 70–90, 94–114, 134–154, 169–189, 197–217, 234–254, 261–281, 286–306, and 335–355; these read AIYA…WLID, GTPT…TLLW, TNVY…VGFV, MLWL…YPPF, ELGL…SNAV, GLAI…AYLA, AGEL…FLWF, VFMG…IAVI, IVLV…IVQV, and KIIV…LSTL.

Belongs to the glycosyltransferase 4 family. MraY subfamily. It depends on Mg(2+) as a cofactor.

It localises to the cell inner membrane. The catalysed reaction is UDP-N-acetyl-alpha-D-muramoyl-L-alanyl-gamma-D-glutamyl-meso-2,6-diaminopimeloyl-D-alanyl-D-alanine + di-trans,octa-cis-undecaprenyl phosphate = di-trans,octa-cis-undecaprenyl diphospho-N-acetyl-alpha-D-muramoyl-L-alanyl-D-glutamyl-meso-2,6-diaminopimeloyl-D-alanyl-D-alanine + UMP. It functions in the pathway cell wall biogenesis; peptidoglycan biosynthesis. Catalyzes the initial step of the lipid cycle reactions in the biosynthesis of the cell wall peptidoglycan: transfers peptidoglycan precursor phospho-MurNAc-pentapeptide from UDP-MurNAc-pentapeptide onto the lipid carrier undecaprenyl phosphate, yielding undecaprenyl-pyrophosphoryl-MurNAc-pentapeptide, known as lipid I. In Syntrophotalea carbinolica (strain DSM 2380 / NBRC 103641 / GraBd1) (Pelobacter carbinolicus), this protein is Phospho-N-acetylmuramoyl-pentapeptide-transferase.